Reading from the N-terminus, the 416-residue chain is Pre-mRNA-splicing factor slu-7 (416 aa).

A disordered region spans residues 1-34 (MPPPPPNRREQATAAPSSTDKSETGAGAARKEDN). Residues 95–112 (GACENCGAMGHKKKDCLE) form a CCHC-type zinc finger. Basic and acidic residues-rich tracts occupy residues 168–179 (RRALQGDQKTPD) and 188–213 (DDKS…QSMR). A disordered region spans residues 168 to 213 (RRALQGDQKTPDGEGADGPEDDKSGFKYDEESDMGRDRATTKQSMR).

It belongs to the SLU7 family. In terms of assembly, associated with the spliceosome.

It is found in the nucleus. Functionally, involved in pre-mRNA splicing. The chain is Pre-mRNA-splicing factor slu-7 (slu-7) from Neurospora crassa (strain ATCC 24698 / 74-OR23-1A / CBS 708.71 / DSM 1257 / FGSC 987).